The primary structure comprises 279 residues: Homeobox protein BarH-like 2 (279 aa).

Disordered stretches follow at residues 110-137 (APGG…RRSR) and 194-279 (KGGQ…PPLS). Residues 118–128 (SSESETEQPTP) are compositionally biased toward polar residues. The segment at residues 133-192 (PRRSRTIFTELQLMGLEKKFQKQKYLSTPDRLDLAQSLGLTQLQVKTWYQNRRMKWKKMV) is a DNA-binding region (homeobox). The segment covering 225-240 (NSQAQGQEQLEPSQGQ) has biased composition (polar residues). Positions 261 to 279 (PPDPPQELPIPSSEPPPLS) are enriched in pro residues.

Belongs to the BAR homeobox family. In terms of tissue distribution, highly expressed in adult salivary gland and at much lower levels in mammary gland, kidney and placenta.

It localises to the nucleus. Functionally, transcription factor. Binds optimally to the DNA consensus sequence 5'-YYTAATGRTTTTY-3'. May control the expression of neural adhesion molecules such as L1 or Ng-CAM during embryonic development of both the central and peripherical nervous system. May be involved in controlling adhesive processes in keratinizing epithelia. The protein is Homeobox protein BarH-like 2 (BARX2) of Homo sapiens (Human).